Reading from the N-terminus, the 205-residue chain is Holliday junction branch migration complex subunit RuvA (205 aa).

The segment at 1-64 (MIGRLRGLLV…EDAQLLYGFI (64 aa)) is domain I. The interval 65–143 (TKQERALFRL…SLMEASAGSE (79 aa)) is domain II. The interval 144–156 (REFMLKSNYTPAP) is flexible linker. Residues 157-205 (VINTAEEDAIAALLSLGYKPAQASKAVSAVYQDGMDSETLIKSSLKSML) form a domain III region.

The protein belongs to the RuvA family. As to quaternary structure, homotetramer. Forms an RuvA(8)-RuvB(12)-Holliday junction (HJ) complex. HJ DNA is sandwiched between 2 RuvA tetramers; dsDNA enters through RuvA and exits via RuvB. An RuvB hexamer assembles on each DNA strand where it exits the tetramer. Each RuvB hexamer is contacted by two RuvA subunits (via domain III) on 2 adjacent RuvB subunits; this complex drives branch migration. In the full resolvosome a probable DNA-RuvA(4)-RuvB(12)-RuvC(2) complex forms which resolves the HJ.

Its subcellular location is the cytoplasm. The RuvA-RuvB-RuvC complex processes Holliday junction (HJ) DNA during genetic recombination and DNA repair, while the RuvA-RuvB complex plays an important role in the rescue of blocked DNA replication forks via replication fork reversal (RFR). RuvA specifically binds to HJ cruciform DNA, conferring on it an open structure. The RuvB hexamer acts as an ATP-dependent pump, pulling dsDNA into and through the RuvAB complex. HJ branch migration allows RuvC to scan DNA until it finds its consensus sequence, where it cleaves and resolves the cruciform DNA. The polypeptide is Holliday junction branch migration complex subunit RuvA (Shewanella sediminis (strain HAW-EB3)).